The sequence spans 271 residues: Glutamate 5-kinase (271 aa).

Lys-14 provides a ligand contact to ATP. Substrate contacts are provided by Ser-54, Asp-141, and Asn-157. Residues 177 to 178 (SD) and 219 to 225 (TGGMSSK) each bind ATP.

This sequence belongs to the glutamate 5-kinase family.

The protein localises to the cytoplasm. The catalysed reaction is L-glutamate + ATP = L-glutamyl 5-phosphate + ADP. It functions in the pathway amino-acid biosynthesis; L-proline biosynthesis; L-glutamate 5-semialdehyde from L-glutamate: step 1/2. Its function is as follows. Catalyzes the transfer of a phosphate group to glutamate to form L-glutamate 5-phosphate. The chain is Glutamate 5-kinase from Enterococcus faecalis (strain ATCC 700802 / V583).